The sequence spans 354 residues: Methylthioribose-1-phosphate isomerase (354 aa).

Substrate is bound by residues 58-60 (RGA), R101, and Q204. Catalysis depends on D245, which acts as the Proton donor. A substrate-binding site is contributed by 255-256 (NK).

The protein belongs to the eIF-2B alpha/beta/delta subunits family. MtnA subfamily.

The enzyme catalyses 5-(methylsulfanyl)-alpha-D-ribose 1-phosphate = 5-(methylsulfanyl)-D-ribulose 1-phosphate. It functions in the pathway amino-acid biosynthesis; L-methionine biosynthesis via salvage pathway; L-methionine from S-methyl-5-thio-alpha-D-ribose 1-phosphate: step 1/6. Functionally, catalyzes the interconversion of methylthioribose-1-phosphate (MTR-1-P) into methylthioribulose-1-phosphate (MTRu-1-P). The chain is Methylthioribose-1-phosphate isomerase from Xanthomonas axonopodis pv. citri (strain 306).